A 359-amino-acid chain; its full sequence is MTRLTLALDVMGGDFGPSVTVPAALQALNANSQLTLLLVGNPDIITPLLAKADFEQRSRLQIIPAQSVIASDARPSQAIRASRGTSMRVALELVKEGRAEACVSAGNTGALMGLAKLLLKPLEGIERPALVTVLPHQQKGKTVVLDLGANVDCDSTMLVQFAVMGAVLAEEVVGIKNPRVALLNIGEEETKGLDSIREASLMLKTVPTINYIGYLEANELLTGKTDVLVCDGFTGNVTLKTMEGVVRMFLSLLKSQGEGKKRSWWLLLLKRWLQKSLTRRFSHLNPDQYNGACLLGLRGTVIKSHGAANQRAFAVAIEQAVQAVQRQVPQRIAARLESVYPAGFEPLDDGKGVNLRAHR.

The protein belongs to the PlsX family. In terms of assembly, homodimer. Probably interacts with PlsY.

It is found in the cytoplasm. It carries out the reaction a fatty acyl-[ACP] + phosphate = an acyl phosphate + holo-[ACP]. It participates in lipid metabolism; phospholipid metabolism. Functionally, catalyzes the reversible formation of acyl-phosphate (acyl-PO(4)) from acyl-[acyl-carrier-protein] (acyl-ACP). This enzyme utilizes acyl-ACP as fatty acyl donor, but not acyl-CoA. This chain is Phosphate acyltransferase, found in Salmonella agona (strain SL483).